A 334-amino-acid chain; its full sequence is GTPase Obg (334 aa).

The 159-residue stretch at 1–159 (MRFVDEVVIK…KEVRLELNLL (159 aa)) folds into the Obg domain. The OBG-type G domain maps to 160-331 (ADVALLGLPN…LAKKLNEFLQ (172 aa)). GTP-binding positions include 166 to 173 (GLPNAGKS), 191 to 195 (FTTMY), 212 to 215 (DIPG), 282 to 285 (NKID), and 312 to 314 (SAA). Positions 173 and 193 each coordinate Mg(2+).

This sequence belongs to the TRAFAC class OBG-HflX-like GTPase superfamily. OBG GTPase family. As to quaternary structure, monomer. Mg(2+) serves as cofactor.

The protein resides in the cytoplasm. In terms of biological role, an essential GTPase which binds GTP, GDP and possibly (p)ppGpp with moderate affinity, with high nucleotide exchange rates and a fairly low GTP hydrolysis rate. Plays a role in control of the cell cycle, stress response, ribosome biogenesis and in those bacteria that undergo differentiation, in morphogenesis control. The polypeptide is GTPase Obg (Francisella tularensis subsp. holarctica (strain FTNF002-00 / FTA)).